The sequence spans 170 residues: WRDLGPLPGTKLRHTLWSKGKLLVNMNTNEPLRPSDVAVGSLTFAMPEGLEEHDEDFQNEIAKAALMIIRLEPDSIKDKRELEWSHEGIVAYSKICTHVGCPISLYEQQTHHALCPCHQSTFDLADGARVIFGPAGHALPQLRIGVNDEGYLEALGDFEEPVGPAYWERG.

The region spanning 63–153 (KAALMIIRLE…IGVNDEGYLE (91 aa)) is the Rieske domain. The [2Fe-2S] cluster site is built by Cys-96, His-98, Cys-115, and His-118. Cys-101 and Cys-117 are joined by a disulfide.

In terms of assembly, the cytochrome bc1 complex is composed of a cytochrome b (QcrB), the Rieske iron-sulfur protein (QcrA) and a diheme cytochrome c (QcrC) subunit. [2Fe-2S] cluster serves as cofactor.

Its subcellular location is the cell membrane. In terms of biological role, iron-sulfur subunit of the cytochrome bc1 complex, an essential component of the respiratory electron transport chain required for ATP synthesis. The bc1 complex catalyzes the oxidation of menaquinol and the reduction of cytochrome c in the respiratory chain. The bc1 complex operates through a Q-cycle mechanism that couples electron transfer to generation of the proton gradient that drives ATP synthesis. The chain is Cytochrome bc1 complex Rieske iron-sulfur subunit (qcrA) from Streptomyces lividans.